The primary structure comprises 79 residues: Small ribosomal subunit protein uS17 (79 aa).

Belongs to the universal ribosomal protein uS17 family. As to quaternary structure, part of the 30S ribosomal subunit.

Its function is as follows. One of the primary rRNA binding proteins, it binds specifically to the 5'-end of 16S ribosomal RNA. This chain is Small ribosomal subunit protein uS17, found in Roseobacter denitrificans (strain ATCC 33942 / OCh 114) (Erythrobacter sp. (strain OCh 114)).